The primary structure comprises 336 residues: Dihydroorotate dehydrogenase (quinone) (336 aa).

FMN is bound by residues 62 to 66 (AGLDK) and Thr86. A substrate-binding site is contributed by Lys66. 111-115 (NRMGF) contributes to the substrate binding site. FMN-binding residues include Asn139 and Asn172. Asn172 provides a ligand contact to substrate. Ser175 functions as the Nucleophile in the catalytic mechanism. Asn177 is a binding site for substrate. FMN contacts are provided by Lys217 and Thr245. 246–247 (NT) contacts substrate. FMN contacts are provided by residues Gly268, Gly297, and 318 to 319 (YS).

Belongs to the dihydroorotate dehydrogenase family. Type 2 subfamily. In terms of assembly, monomer. FMN serves as cofactor.

Its subcellular location is the cell membrane. The enzyme catalyses (S)-dihydroorotate + a quinone = orotate + a quinol. The protein operates within pyrimidine metabolism; UMP biosynthesis via de novo pathway; orotate from (S)-dihydroorotate (quinone route): step 1/1. Functionally, catalyzes the conversion of dihydroorotate to orotate with quinone as electron acceptor. This Klebsiella pneumoniae (strain 342) protein is Dihydroorotate dehydrogenase (quinone).